Consider the following 382-residue polypeptide: Queuine tRNA-ribosyltransferase (382 aa).

The active-site Proton acceptor is the aspartate 93. Residues 93–97 (DSGGF), aspartate 147, glutamine 191, and glycine 218 contribute to the substrate site. Residues 249-255 (GVGKPED) are RNA binding. The active-site Nucleophile is aspartate 268. The segment at 273–277 (TRNAR) is RNA binding; important for wobble base 34 recognition. Positions 306, 308, 311, and 337 each coordinate Zn(2+).

Belongs to the queuine tRNA-ribosyltransferase family. In terms of assembly, homodimer. Within each dimer, one monomer is responsible for RNA recognition and catalysis, while the other monomer binds to the replacement base PreQ1. Zn(2+) is required as a cofactor.

The catalysed reaction is 7-aminomethyl-7-carbaguanine + guanosine(34) in tRNA = 7-aminomethyl-7-carbaguanosine(34) in tRNA + guanine. It functions in the pathway tRNA modification; tRNA-queuosine biosynthesis. In terms of biological role, catalyzes the base-exchange of a guanine (G) residue with the queuine precursor 7-aminomethyl-7-deazaguanine (PreQ1) at position 34 (anticodon wobble position) in tRNAs with GU(N) anticodons (tRNA-Asp, -Asn, -His and -Tyr). Catalysis occurs through a double-displacement mechanism. The nucleophile active site attacks the C1' of nucleotide 34 to detach the guanine base from the RNA, forming a covalent enzyme-RNA intermediate. The proton acceptor active site deprotonates the incoming PreQ1, allowing a nucleophilic attack on the C1' of the ribose to form the product. After dissociation, two additional enzymatic reactions on the tRNA convert PreQ1 to queuine (Q), resulting in the hypermodified nucleoside queuosine (7-(((4,5-cis-dihydroxy-2-cyclopenten-1-yl)amino)methyl)-7-deazaguanosine). This Haemophilus influenzae (strain PittEE) protein is Queuine tRNA-ribosyltransferase.